We begin with the raw amino-acid sequence, 278 residues long: MGIRKYKPTTPGRRGASVADFVEITREHPEKSLVRPLHSKGGRNVYGRITTRHQGGGHKRAYRLIDFKRADKDGVPAKVAHIEYDPNRTARIALLHYADGEKRYILAPARLAQGDVVESGPGADIKPGNNLPLRNIPVGTVVHAIELRPGGGAKIARSAGASVQLVAKEGMYAQLRMPSGEIRNVDIRCRATVGEVGNAEQSNISWGKAGRMRWKGKRPSVRGVAMNPIDHPLGGGEGKSSGGRHPVSPWGKPEGRTRRKHKPSDKLIVRRRKSNKKR.

2 stretches are compositionally biased toward basic residues: residues 210–220 (GRMRWKGKRPS) and 257–278 (TRRK…NKKR). A disordered region spans residues 210–278 (GRMRWKGKRP…VRRRKSNKKR (69 aa)).

Belongs to the universal ribosomal protein uL2 family. Part of the 50S ribosomal subunit. Forms a bridge to the 30S subunit in the 70S ribosome.

One of the primary rRNA binding proteins. Required for association of the 30S and 50S subunits to form the 70S ribosome, for tRNA binding and peptide bond formation. It has been suggested to have peptidyltransferase activity; this is somewhat controversial. Makes several contacts with the 16S rRNA in the 70S ribosome. This is Large ribosomal subunit protein uL2 from Acidothermus cellulolyticus (strain ATCC 43068 / DSM 8971 / 11B).